Reading from the N-terminus, the 146-residue chain is Aspartate 1-decarboxylase (146 aa).

Serine 25 serves as the catalytic Schiff-base intermediate with substrate; via pyruvic acid. The residue at position 25 (serine 25) is a Pyruvic acid (Ser). Position 57 (threonine 57) interacts with substrate. Tyrosine 58 serves as the catalytic Proton donor. Substrate is bound at residue 73 to 75; sequence GPA.

It belongs to the PanD family. In terms of assembly, heterooctamer of four alpha and four beta subunits. Pyruvate serves as cofactor. Is synthesized initially as an inactive proenzyme, which is activated by self-cleavage at a specific serine bond to produce a beta-subunit with a hydroxyl group at its C-terminus and an alpha-subunit with a pyruvoyl group at its N-terminus.

Its subcellular location is the cytoplasm. The catalysed reaction is L-aspartate + H(+) = beta-alanine + CO2. Its pathway is cofactor biosynthesis; (R)-pantothenate biosynthesis; beta-alanine from L-aspartate: step 1/1. Its function is as follows. Catalyzes the pyruvoyl-dependent decarboxylation of aspartate to produce beta-alanine. This is Aspartate 1-decarboxylase from Salinibacter ruber (strain DSM 13855 / M31).